Consider the following 302-residue polypeptide: Ubiquinone biosynthesis protein COQ4, mitochondrial (302 aa).

The transit peptide at Met-1–Gln-19 directs the protein to the mitochondrion. 4 residues coordinate Zn(2+): His-176, Asp-177, His-180, and Glu-192. The segment covering Pro-268–Ala-282 has biased composition (basic and acidic residues). Residues Pro-268 to Leu-302 form a disordered region.

The protein belongs to the COQ4 family. Component of a multi-subunit COQ enzyme complex, composed of at least COQ3, COQ4, COQ5, COQ6, COQ7 and COQ9. Requires Zn(2+) as cofactor.

It localises to the mitochondrion inner membrane. The enzyme catalyses a 4-hydroxy-3-methoxy-5-(all-trans-polyprenyl)benzoate + H(+) = a 2-methoxy-6-(all-trans-polyprenyl)phenol + CO2. It functions in the pathway cofactor biosynthesis; ubiquinone biosynthesis. Its function is as follows. Lyase that catalyzes the C1-decarboxylation of 4-hydroxy-3-methoxy-5-(all-trans-polyprenyl)benzoic acid into 2-methoxy-6-(all-trans-polyprenyl)phenol during ubiquinone biosynthesis. This chain is Ubiquinone biosynthesis protein COQ4, mitochondrial, found in Pyricularia oryzae (strain 70-15 / ATCC MYA-4617 / FGSC 8958) (Rice blast fungus).